The primary structure comprises 690 residues: MAHNYLLEIGLEEIPAHVVTPSIKQLVQKVTAFLKENRLTYDSIDHFSTPRRLAIRINGLGDQQPDIEEDAKGPARKIAQDADGNWTKAAIGFTRGQGLTVDDITFKTIKGTDYVYVHKLIKGKMTKEILTGLKEVVESINFPTMMKWANFDFKYVRPIRWLVSILDEEVLPFSILDVTAGRRTEGHRFLGEAVELANAEEYEAKLHDQFVIVDADERKQLISNQIKAIAESNRWNVTPNPGLLEEVNNLVEWPTAFNGGFDEKYLAIPEEVLITSMRDHQRFFFVRDQAGKLLPNFISVRNGNEEFIENVVRGNEKVLTARLEDAAFFYEEDQKHDINYYVDRLKKVSFHDKIGSMYEKLQRVNSIAKVIGNTLNLNQTELDDIDRATMIYKFDLVTGMVGEFSELQGVMGEKYAQLNGENQAVAQAIREHYMPNSAEGDLPESVTGAVVALADKFDNIFSFFSAGMIPSGSNDPYALRRHAYGIVRILNSRDWQLDLNQFKSQVKTELAENGTAFGVDVDQNFDQVLNFFNDRIKQLLDHQKISHDIVETVLTGNNHDVTEIIEAAQVLADAKASSTFKDDIEALTRVQRIATKNEESGELNVDPQLFNNASEGELFDQIIKIEAANNLTMSQLFAKLCELTPAISKYFDATMVMDKDENIKRNRLNMMSRLANLILKIGDLTNVLVK.

The protein belongs to the class-II aminoacyl-tRNA synthetase family. In terms of assembly, tetramer of two alpha and two beta subunits.

It is found in the cytoplasm. It catalyses the reaction tRNA(Gly) + glycine + ATP = glycyl-tRNA(Gly) + AMP + diphosphate. This chain is Glycine--tRNA ligase beta subunit, found in Pediococcus pentosaceus (strain ATCC 25745 / CCUG 21536 / LMG 10740 / 183-1w).